A 192-amino-acid chain; its full sequence is Thymidine kinase (192 aa).

ATP is bound by residues 9-16 and 87-90; these read SAMNAGKS and DECQ. Catalysis depends on E88, which acts as the Proton acceptor. Residues C145, C147, C182, and H185 each coordinate Zn(2+).

Belongs to the thymidine kinase family. In terms of assembly, homotetramer.

Its subcellular location is the cytoplasm. The enzyme catalyses thymidine + ATP = dTMP + ADP + H(+). The chain is Thymidine kinase from Photobacterium profundum (strain SS9).